We begin with the raw amino-acid sequence, 395 residues long: Pesticidal crystal protein Cry6Ba (395 aa).

This sequence belongs to the cry6A endotoxin family.

Its function is as follows. Endotoxin with nematicidal activity. In Bacillus thuringiensis, this protein is Pesticidal crystal protein Cry6Ba (cry6Ba).